Here is a 338-residue protein sequence, read N- to C-terminus: Ketoreductase azaE (338 aa).

Residues lysine 41 and tyrosine 166 each coordinate NADP(+).

It belongs to the NAD(P)-dependent epimerase/dehydratase family. Dihydroflavonol-4-reductase subfamily.

The protein operates within secondary metabolite biosynthesis. Functionally, ketoreductase; part of the gene cluster that mediates the biosynthesis of azaphilones, a class of fungal metabolites characterized by a highly oxygenated pyrano-quinone bicyclic core and exhibiting a broad range of bioactivities. In the first step, the non-reducing polyketide synthase azaA forms the hexaketide precursor from successive condensations of five malonyl-CoA units, presumably with a simple acetyl-CoA starter unit. The reactive polyketide chain then undergoes a PT-mediated C2-C7 cyclization to afford the aromatic ring and is eventually released as an aldehyde through the R-domain. The putative ketoreductase azaE is proposed to catalyze the reduction of the terminal ketone resulting in the early culture product FK17-P2a. The monooxygenase azaH was demonstrated to be the only enzyme required to convert FK17-P2a to azanigerone E. AzaH first hydroxylates the benzaldehyde intermediate FK17-P2a at C4, which triggers the formation of the pyran-ring to afford azanigerone E. In parallel, the 2,4-dimethylhexanoyl chain is synthesized by the HR-PKS azaB and is proposed to be transferred to the C4-hydroxyl of azanigerone E by the acyltransferase azaD directly from the ACP domain of azaB. Alternatively, the 2,4-dimethyl-hexanoyl chain may be offloaded from the HR-PKS as a carboxylic acid and converted to an acyl-CoA by azaF. The resulting acyl-CoA molecule could then be taken up as a substrate by AzaD to form azanigerone B. To yield the carboxylic acid substituent in azanigerone A, the hydroxypropyl side chain of azanigerone B would need to undergo a C-C oxidative cleavage catalyzed by cytochrome P450 AzaI. AzaI is proposed to act on a vicinal diol that leads to a C-C bond scission either through an alkoxyradical intermediate or a peroxy complex. In the biosynthesis of azanigerone A, azanigerone B first undergoes hydroxylation at C10, possibly catalyzed by one of the two FAD-dependent monooxygenases encoded in the cluster, azaG or azaL, resulting in the vicinal diol azanigerone C. Oxidative cleavage of azanigerone C by azaI would yield the corresponding aldehyde derivative of azanigerone A. Finally, the dehydrogenase azaJ is proposed to convert the aldehyde functional group into the carboxylic acid, completing the conversion from azanigerone B to azanigerone A. Alternatively, the oxidation of aldehyde to carboxylic acid may be catalyzed by the same P450 enzyme azaI via consecutive oxidation or by endogenous alcohol dehydrogenase. The sequence is that of Ketoreductase azaE from Aspergillus niger (strain ATCC 1015 / CBS 113.46 / FGSC A1144 / LSHB Ac4 / NCTC 3858a / NRRL 328 / USDA 3528.7).